A 554-amino-acid chain; its full sequence is 7-epi-sesquithujene synthase (554 aa).

Mg(2+) contacts are provided by Asp308 and Asp312. Asp308, Asp312, Arg449, and Asn452 together coordinate substrate. Residues 308–312 carry the DDXXD motif motif; sequence DDMFD. Mg(2+) is bound by residues Asn452, Ser456, and Glu460.

The protein belongs to the terpene synthase family. Monomer. Requires Mg(2+) as cofactor. Mn(2+) is required as a cofactor. In terms of tissue distribution, highly expressed in the husk. Detected in leaf sheaths and leaves.

The protein localises to the cytoplasm. The catalysed reaction is (2E,6E)-farnesyl diphosphate = 7-epi-sesquithujene + diphosphate. The enzyme catalyses (2E,6E)-farnesyl diphosphate = (1S,5S,6R)-alpha-bergamotene + diphosphate. It carries out the reaction (2E,6E)-farnesyl diphosphate = (E)-beta-farnesene + diphosphate. It catalyses the reaction (2E,6E)-farnesyl diphosphate = (S)-beta-bisabolene + diphosphate. The catalysed reaction is (2Z,6E)-farnesyl diphosphate = (-)-beta-curcumene + diphosphate. The enzyme catalyses (2E,6E)-farnesyl diphosphate = gamma-curcumene + diphosphate. It carries out the reaction (2E,6E)-farnesyl diphosphate = sesquisabinene A + diphosphate. It functions in the pathway secondary metabolite biosynthesis; terpenoid biosynthesis. Functionally, sesquiterpene synthase involved in the production after herbivore attack of a blend of volatiles that attracts natural enemies of herbivores. Converts farnesyl diphosphate to (S)-beta-bisabolene and 7-epi-sesquithujene, along with a mixture of more than 20 other minor sesquiterpene olefins. Can also act in vitro as a monoterpene synthase, converting geranyl diphosphate to (S)-(-)-limonene, beta-myrcene and 11 other monoterpenes. This Zea mays (Maize) protein is 7-epi-sesquithujene synthase.